The primary structure comprises 791 residues: MGTVGKKKDRPAHGCSTIPKLALELKQIIHSTTHPKVPAVTPLRVMMPLGKLSKGASLDELIQMCIQAFDLDGNMGQNNELLQIMLTMHGFLIPSTELLIKLRTLYQDAMQNRSFSFCLRICYFIRYWITELWVMFKMDAKLTQTMEEFQELVRSHGEELHWRLIDTAQINSRDWSRKLTQRIQSNCSKKRKVSLLFDHLEPQELAEHLTYLEFKAFRRISFSDYQNYIVNGCVKDNPTMERSIALCNGISQWVQLMVLSRPTPQLRAEVLTKFIHVAQKLHQLQNFNTLMAVIGGLCHSSISRLKDTSSHVSHDVTKVLNEMTELLSSCRNYDNYRRAYNECTNFKIPILGVHLKDLIALHEAMPDFLEESKINVPKLHSLYNHINELIQLQNIAPPLEANMDLVHLLTLSLDLYYTEDEMYELSYAREPRNYRAPPVTPSKPPVVADWASGVSPKPDPKTISKHVQRMVDSVFKNYDLDQDGYISQEEFEKIAASFPFSFCVMDKDREGLISRQEITAYFMRASSICSKLGLGFLHNFQETTYLRPTFCDNCAGFLWGVIKQGYRCKDCGMNCHKQCKELVVFECKKRSKCSMGENNTLSDAGQLEVIPAGGKGLTNDCLGADEGPYSYPNGDGDIHTEVSKDRTIMLMGSSAQKISVRLQPAVKHRATQTENETQSLCLQVPSPPRSRTPDLTSHLPISPMPSPCPSPVPTRKKAYAKWENKDSIRKARAELRGGKAGIQELEKEKVFLKEENTALKIQLKDAHRRVETLRAELRKYVLDSDTHQKGS.

Residues 49–172 (LGKLSKGASL…RLIDTAQINS (124 aa)) form the N-terminal Ras-GEF domain. The segment at 53–106 (SKGASLDELIQMCIQAFDLDGNMGQNNELLQIMLTMHGFLIPSTELLIKLRTLY) is ras exchanger motif region; required for transforming activity. The Ras-GEF domain occupies 201-432 (EPQELAEHLT…YELSYAREPR (232 aa)). EF-hand domains follow at residues 466 to 501 (HVQR…FPFS) and 502 to 528 (FCVM…ASSI). The Ca(2+) site is built by Asp479, Asp481, Asp483, Tyr485, Glu490, Asp506, Asp508, Glu510, and Glu517. The segment at 537–587 (LHNFQETTYLRPTFCDNCAGFLWGVIKQGYRCKDCGMNCHKQCKELVVFEC) adopts a Phorbol-ester/DAG-type zinc-finger fold. Residues 671-715 (TQTENETQSLCLQVPSPPRSRTPDLTSHLPISPMPSPCPSPVPTR) form a disordered region. Positions 672–681 (QTENETQSLC) are enriched in polar residues. Over residues 702–712 (SPMPSPCPSPV) the composition is skewed to pro residues. Residues 728–783 (IRKARAELRGGKAGIQELEKEKVFLKEENTALKIQLKDAHRRVETLRAELRKYVLD) adopt a coiled-coil conformation.

Belongs to the RASGRP family.

Its subcellular location is the cytoplasm. It localises to the cytosol. It is found in the cell membrane. The protein resides in the golgi apparatus membrane. The protein localises to the endoplasmic reticulum membrane. With respect to regulation, regulated by F-actin polymerization and probably by calcium. Its function is as follows. Functions as a diacylglycerol (DAG)-regulated nucleotide exchange factor specifically activating Ras through the exchange of bound GDP for GTP. The sequence is that of RAS guanyl-releasing protein 1 (rasgrp1) from Xenopus laevis (African clawed frog).